Consider the following 456-residue polypeptide: Arginine biosynthesis bifunctional protein ArgJ, mitochondrial (456 aa).

Positions 184, 213, 224, 311, 451, and 456 each coordinate substrate. The active-site Nucleophile is Thr-224.

Belongs to the ArgJ family. In terms of assembly, heterodimer of an alpha and a beta chain. Post-translationally, the alpha and beta chains are autoproteolytically processed from a single precursor protein within the mitochondrion.

It is found in the mitochondrion matrix. The enzyme catalyses N(2)-acetyl-L-ornithine + L-glutamate = N-acetyl-L-glutamate + L-ornithine. The catalysed reaction is L-glutamate + acetyl-CoA = N-acetyl-L-glutamate + CoA + H(+). It participates in amino-acid biosynthesis; L-arginine biosynthesis; L-ornithine and N-acetyl-L-glutamate from L-glutamate and N(2)-acetyl-L-ornithine (cyclic): step 1/1. Its pathway is amino-acid biosynthesis; L-arginine biosynthesis; N(2)-acetyl-L-ornithine from L-glutamate: step 1/4. Catalyzes two activities which are involved in the cyclic version of arginine biosynthesis: the synthesis of acetylglutamate from glutamate and acetyl-CoA, and of ornithine by transacetylation between acetylornithine and glutamate. The polypeptide is Arginine biosynthesis bifunctional protein ArgJ, mitochondrial (Aspergillus niger (strain ATCC MYA-4892 / CBS 513.88 / FGSC A1513)).